Here is a 402-residue protein sequence, read N- to C-terminus: Argininosuccinate synthase (402 aa).

Residues 10–18 and Ala37 contribute to the ATP site; that span reads AYSGGLDTS. L-citrulline is bound by residues Tyr88 and Ser93. Residue Gly118 participates in ATP binding. L-aspartate is bound by residues Thr120, Asn124, and Asp125. Residue Asn124 coordinates L-citrulline. Arg128, Ser179, Ser188, Glu264, and Tyr276 together coordinate L-citrulline.

This sequence belongs to the argininosuccinate synthase family. Type 1 subfamily. Homotetramer.

The protein resides in the cytoplasm. The enzyme catalyses L-citrulline + L-aspartate + ATP = 2-(N(omega)-L-arginino)succinate + AMP + diphosphate + H(+). It participates in amino-acid biosynthesis; L-arginine biosynthesis; L-arginine from L-ornithine and carbamoyl phosphate: step 2/3. This Alkalilimnicola ehrlichii (strain ATCC BAA-1101 / DSM 17681 / MLHE-1) protein is Argininosuccinate synthase.